The following is a 688-amino-acid chain: PTS system glucoside-specific EIICBA component (688 aa).

One can recognise a PTS EIIC type-1 domain in the interval 3–427 (KKLFGQLQRI…FKLKTPGRED (425 aa)). The next 10 helical transmembrane spans lie at 12 to 32 (IGKA…LLAF), 81 to 101 (LGLA…YLIM), 137 to 157 (LVLG…MGAL), 182 to 202 (FVPI…SFAW), 223 to 243 (LTTF…LHHI), 284 to 304 (AFTT…AFAI), 315 to 335 (VVGG…ITEP), 340 to 360 (FLFV…TSFL), 364 to 384 (LLGV…ILYG), and 395 to 415 (LVIP…DFAI). A PTS EIIB type-1 domain is found at 438 to 519 (AKLPFDVLDA…AKIMSGEITK (82 aa)). The active-site Phosphocysteine intermediate; for EIIB activity is Cys460. In terms of domain architecture, PTS EIIA type-1 spans 560 to 664 (DQVFAGKMMG…SIVTPMIITN (105 aa)). The active-site Tele-phosphohistidine intermediate; for EIIA activity is the His612.

It is found in the cell membrane. Its function is as follows. The phosphoenolpyruvate-dependent sugar phosphotransferase system (sugar PTS), a major carbohydrate active -transport system, catalyzes the phosphorylation of incoming sugar substrates concomitantly with their translocation across the cell membrane. This system is involved in alpha- and beta-glucoside transport. The sequence is that of PTS system glucoside-specific EIICBA component (glcB) from Staphylococcus aureus (strain JH1).